A 261-amino-acid chain; its full sequence is MLIYSIVLMLVVTLIIASITLLERKLLSLVQRRVGPNFVGYKGRLQYLADALKLFLKGVAIPSGANSFFFVAMPSLAGAVCYTFWMNSIWGPSLSMFDVEYNIVYASLLSILFGLCVMLTGYFSKNKYSVMAGLRAAILMLNLEIFLGIVFLNVCFLVESFSFAAFAVYQEIFWLIFLFFFLLSNILLVFLLEVNRTPFDLAEAESELVTGYTTEYGGFYFALFYLGEYFHLFFFSCLISVVFFGSWELLKPFLFLHNYTV.

Transmembrane regions (helical) follow at residues 2 to 22, 69 to 89, 103 to 123, 138 to 158, 172 to 192, and 224 to 244; these read LIYS…ITLL, FFVA…MNSI, IVYA…TGYF, ILML…CFLV, IFWL…VFLL, and FYLG…VVFF.

This sequence belongs to the complex I subunit 1 family.

The protein resides in the mitochondrion inner membrane. It carries out the reaction a ubiquinone + NADH + 5 H(+)(in) = a ubiquinol + NAD(+) + 4 H(+)(out). Functionally, core subunit of the mitochondrial membrane respiratory chain NADH dehydrogenase (Complex I) that is believed to belong to the minimal assembly required for catalysis. Complex I functions in the transfer of electrons from NADH to the respiratory chain. The immediate electron acceptor for the enzyme is believed to be ubiquinone. This Paramecium tetraurelia protein is NADH-ubiquinone oxidoreductase chain 1 (ND1).